Reading from the N-terminus, the 700-residue chain is Polyphosphate kinase (700 aa).

Asn-45 is a binding site for ATP. Mg(2+) contacts are provided by Arg-373 and Arg-403. The PLD phosphodiesterase 1 domain occupies 428–462 (PGMKIHAKLLLITRREEQGFVRYAHIGTGNFHERT). The active-site Phosphohistidine intermediate is the His-433. Residues Tyr-466, Arg-562, and His-590 each coordinate ATP. Residues 585-615 (DRFLEHPRVLVVHNDGDPQVFISSADWMERN) enclose the PLD phosphodiesterase 2 domain.

Belongs to the polyphosphate kinase 1 (PPK1) family. Mg(2+) serves as cofactor. In terms of processing, an intermediate of this reaction is the autophosphorylated ppk in which a phosphate is covalently linked to a histidine residue through a N-P bond.

The enzyme catalyses [phosphate](n) + ATP = [phosphate](n+1) + ADP. In terms of biological role, catalyzes the reversible transfer of the terminal phosphate of ATP to form a long-chain polyphosphate (polyP). This Vibrio vulnificus (strain YJ016) protein is Polyphosphate kinase.